The sequence spans 201 residues: Recombination protein RecR (201 aa).

A C4-type zinc finger spans residues 60–75; that stretch reads CSCCGNVDTIDPCTVC. The 96-residue stretch at 83–178 folds into the Toprim domain; it reads AVIIVVEDVA…RITRLAHGVP (96 aa).

This sequence belongs to the RecR family.

Its function is as follows. May play a role in DNA repair. It seems to be involved in an RecBC-independent recombinational process of DNA repair. It may act with RecF and RecO. The sequence is that of Recombination protein RecR from Rhizobium meliloti (strain 1021) (Ensifer meliloti).